Here is a 280-residue protein sequence, read N- to C-terminus: Ribosomal RNA small subunit methyltransferase I (280 aa).

Belongs to the methyltransferase superfamily. RsmI family.

It is found in the cytoplasm. The catalysed reaction is cytidine(1402) in 16S rRNA + S-adenosyl-L-methionine = 2'-O-methylcytidine(1402) in 16S rRNA + S-adenosyl-L-homocysteine + H(+). Catalyzes the 2'-O-methylation of the ribose of cytidine 1402 (C1402) in 16S rRNA. In Rickettsia prowazekii (strain Madrid E), this protein is Ribosomal RNA small subunit methyltransferase I.